The following is a 198-amino-acid chain: Peptidyl-tRNA hydrolase (198 aa).

Residue Tyr14 participates in tRNA binding. The Proton acceptor role is filled by His19. TRNA is bound by residues Tyr64, Asn66, and Asn112.

Belongs to the PTH family. In terms of assembly, monomer.

It localises to the cytoplasm. It carries out the reaction an N-acyl-L-alpha-aminoacyl-tRNA + H2O = an N-acyl-L-amino acid + a tRNA + H(+). Its function is as follows. Hydrolyzes ribosome-free peptidyl-tRNAs (with 1 or more amino acids incorporated), which drop off the ribosome during protein synthesis, or as a result of ribosome stalling. In terms of biological role, catalyzes the release of premature peptidyl moieties from peptidyl-tRNA molecules trapped in stalled 50S ribosomal subunits, and thus maintains levels of free tRNAs and 50S ribosomes. The sequence is that of Peptidyl-tRNA hydrolase from Beijerinckia indica subsp. indica (strain ATCC 9039 / DSM 1715 / NCIMB 8712).